A 224-amino-acid polypeptide reads, in one-letter code: 7-cyano-7-deazaguanine synthase (224 aa).

10–20 (LSGGLDSATVV) contributes to the ATP binding site. Residues Cys189, Cys199, Cys202, and Cys205 each contribute to the Zn(2+) site.

Belongs to the QueC family. It depends on Zn(2+) as a cofactor.

The catalysed reaction is 7-carboxy-7-deazaguanine + NH4(+) + ATP = 7-cyano-7-deazaguanine + ADP + phosphate + H2O + H(+). The protein operates within purine metabolism; 7-cyano-7-deazaguanine biosynthesis. Functionally, catalyzes the ATP-dependent conversion of 7-carboxy-7-deazaguanine (CDG) to 7-cyano-7-deazaguanine (preQ(0)). This is 7-cyano-7-deazaguanine synthase from Stutzerimonas stutzeri (strain A1501) (Pseudomonas stutzeri).